Here is a 105-residue protein sequence, read N- to C-terminus: Large ribosomal subunit protein P2 (105 aa).

The segment at 84-105 is disordered; that stretch reads AEAKKEEPEEEADDDMGFGLFD.

It belongs to the eukaryotic ribosomal protein P1/P2 family. P1 and P2 exist as dimers at the large ribosomal subunit. Post-translationally, phosphorylated.

In terms of biological role, plays an important role in the elongation step of protein synthesis. The polypeptide is Large ribosomal subunit protein P2 (ARP-1) (Leishmania donovani).